The sequence spans 879 residues: Leucine--tRNA ligase (879 aa).

The 'HIGH' region signature appears at P45 to H55. The 'KMSKS' region motif lies at K637 to S641. K640 provides a ligand contact to ATP.

This sequence belongs to the class-I aminoacyl-tRNA synthetase family.

Its subcellular location is the cytoplasm. The enzyme catalyses tRNA(Leu) + L-leucine + ATP = L-leucyl-tRNA(Leu) + AMP + diphosphate. This Xylella fastidiosa (strain M23) protein is Leucine--tRNA ligase.